The following is a 223-amino-acid chain: Putative germin-like protein subfamily 1 member 12 (223 aa).

A signal peptide spans 1-24 (MNMKNLYLAILYLLAASTLPFAIA). A disulfide bridge connects residues Cys-34 and Cys-51. Residues 65–216 (SGLDKARTTE…AFQLDPKVII (152 aa)) form the Cupin type-1 domain. N-linked (GlcNAc...) asparagine glycosylation is present at Asn-81. Mn(2+) contacts are provided by His-114, His-116, and Glu-121. The N-linked (GlcNAc...) asparagine glycan is linked to Asn-145. His-162 lines the Mn(2+) pocket.

It belongs to the germin family. Oligomer (believed to be a pentamer but probably hexamer).

The protein localises to the secreted. It localises to the extracellular space. Its subcellular location is the apoplast. May play a role in plant defense. Probably has no oxalate oxidase activity even if the active site is conserved. In Arabidopsis thaliana (Mouse-ear cress), this protein is Putative germin-like protein subfamily 1 member 12.